Reading from the N-terminus, the 915-residue chain is DNA (cytosine-5)-methyltransferase 2 (915 aa).

Over residues methionine 1–alanine 14 the composition is skewed to low complexity. Residues methionine 1–aspartate 171 are disordered. The span at serine 15 to glutamine 30 shows a compositional bias: basic and acidic residues. Basic residues predominate over residues alanine 42–proline 57. Residues lysine 71–proline 80 are compositionally biased toward basic and acidic residues. The segment covering valine 81–alanine 108 has biased composition (acidic residues). Low complexity predominate over residues methionine 109 to glycine 119. Residues isoleucine 188–serine 313 form the BAH domain. The segment covering glutamate 315–serine 328 has biased composition (polar residues). The interval glutamate 315–serine 338 is disordered. The SAM-dependent MTase C5-type domain occupies alanine 345–glutamate 876. The region spanning phenylalanine 445–leucine 508 is the Chromo domain. Cysteine 521 is a catalytic residue.

It belongs to the class I-like SAM-binding methyltransferase superfamily. C5-methyltransferase family.

The protein resides in the nucleus. The catalysed reaction is a 2'-deoxycytidine in DNA + S-adenosyl-L-methionine = a 5-methyl-2'-deoxycytidine in DNA + S-adenosyl-L-homocysteine + H(+). May be involved in the CpXpG methylation and in gene silencing. The sequence is that of DNA (cytosine-5)-methyltransferase 2 (ZMET5) from Zea mays (Maize).